Reading from the N-terminus, the 177-residue chain is Large ribosomal subunit protein uL6 (177 aa).

It belongs to the universal ribosomal protein uL6 family. In terms of assembly, part of the 50S ribosomal subunit.

Its function is as follows. This protein binds to the 23S rRNA, and is important in its secondary structure. It is located near the subunit interface in the base of the L7/L12 stalk, and near the tRNA binding site of the peptidyltransferase center. In Rickettsia peacockii (strain Rustic), this protein is Large ribosomal subunit protein uL6.